Reading from the N-terminus, the 473-residue chain is Ribulose bisphosphate carboxylase large chain (473 aa).

Residues Asn-116 and Thr-166 each coordinate substrate. The active-site Proton acceptor is the Lys-168. Lys-170 serves as a coordination point for substrate. Lys-194, Asp-196, and Glu-197 together coordinate Mg(2+). N6-carboxylysine is present on Lys-194. His-287 acts as the Proton acceptor in catalysis. Arg-288, His-320, and Ser-372 together coordinate substrate.

The protein belongs to the RuBisCO large chain family. Type I subfamily. In terms of assembly, heterohexadecamer of 8 large chains and 8 small chains. The cofactor is Mg(2+).

It catalyses the reaction 2 (2R)-3-phosphoglycerate + 2 H(+) = D-ribulose 1,5-bisphosphate + CO2 + H2O. The catalysed reaction is D-ribulose 1,5-bisphosphate + O2 = 2-phosphoglycolate + (2R)-3-phosphoglycerate + 2 H(+). Functionally, ruBisCO catalyzes two reactions: the carboxylation of D-ribulose 1,5-bisphosphate, the primary event in carbon dioxide fixation, as well as the oxidative fragmentation of the pentose substrate. Both reactions occur simultaneously and in competition at the same active site. This chain is Ribulose bisphosphate carboxylase large chain, found in Rhodobacter capsulatus (strain ATCC BAA-309 / NBRC 16581 / SB1003).